The chain runs to 134 residues: Small ribosomal subunit protein uS8 (134 aa).

Belongs to the universal ribosomal protein uS8 family. In terms of assembly, part of the 30S ribosomal subunit. Contacts proteins S5 and S12.

In terms of biological role, one of the primary rRNA binding proteins, it binds directly to 16S rRNA central domain where it helps coordinate assembly of the platform of the 30S subunit. This chain is Small ribosomal subunit protein uS8, found in Synechococcus sp. (strain JA-3-3Ab) (Cyanobacteria bacterium Yellowstone A-Prime).